A 726-amino-acid chain; its full sequence is Catalase-peroxidase (726 aa).

The segment at residues 90 to 213 (WHAAGTYRIG…LAAVQMGLIY (124 aa)) is a cross-link (tryptophyl-tyrosyl-methioninium (Trp-Tyr) (with M-239)). H91 (proton acceptor) is an active-site residue. Positions 213–239 (YVNPEGPNGKPDPAAAARDIRETFARM) form a cross-link, tryptophyl-tyrosyl-methioninium (Tyr-Met) (with W-90). H254 serves as a coordination point for heme b. Positions 338–359 (TPKGGAGAGTVPDAHDPSKRHA) are disordered.

This sequence belongs to the peroxidase family. Peroxidase/catalase subfamily. As to quaternary structure, homodimer or homotetramer. It depends on heme b as a cofactor. Formation of the three residue Trp-Tyr-Met cross-link is important for the catalase, but not the peroxidase activity of the enzyme.

It carries out the reaction H2O2 + AH2 = A + 2 H2O. The enzyme catalyses 2 H2O2 = O2 + 2 H2O. In terms of biological role, bifunctional enzyme with both catalase and broad-spectrum peroxidase activity. This is Catalase-peroxidase from Bradyrhizobium sp. (strain ORS 278).